Here is an 89-residue protein sequence, read N- to C-terminus: uncharacterized protein (89 aa).

This is an uncharacterized protein from Geobacillus stearothermophilus (Bacillus stearothermophilus).